Consider the following 239-residue polypeptide: Proteasome activator complex subunit 2 (239 aa).

Residue Ala-2 is modified to N-acetylalanine. Phosphoserine is present on Ser-10. The disordered stretch occupies residues 65–86 (DIPIPDPPPKDDEMETDKQEKK). The segment covering 72–86 (PPKDDEMETDKQEKK) has biased composition (basic and acidic residues).

This sequence belongs to the PA28 family. As to quaternary structure, heterodimer of PSME1 and PSME2, which forms a hexameric ring.

Functionally, implicated in immunoproteasome assembly and required for efficient antigen processing. The PA28 activator complex enhances the generation of class I binding peptides by altering the cleavage pattern of the proteasome. This chain is Proteasome activator complex subunit 2 (PSME2), found in Sus scrofa (Pig).